A 375-amino-acid polypeptide reads, in one-letter code: Chanoclavine-I aldehyde reductase ifgG (375 aa).

FMN contacts are provided by residues 31-33 (PTT), alanine 66, glutamine 108, and histidine 176. Substrate is bound by residues histidine 176 and asparagine 179. Tyrosine 181 (proton donor) is an active-site residue. FMN contacts are provided by residues lysine 228, glycine 300, 325-326 (GR), and arginine 326. Substrate is bound at residue tyrosine 353.

The protein belongs to the NADH:flavin oxidoreductase/NADH oxidase family. The cofactor is FMN.

It catalyses the reaction dihydrochanoclavine-I aldehyde + NADP(+) = chanoclavine-I aldehyde + NADPH + H(+). It functions in the pathway alkaloid biosynthesis; ergot alkaloid biosynthesis. Its function is as follows. Chanoclavine-I aldehyde reductase; part of the gene cluster that mediates the biosynthesis of isofumigaclavines, fungal ergot alkaloids. The tryptophan dimethylallyltransferase ifgA catalyzes the first step of ergot alkaloid biosynthesis by condensing dimethylallyl diphosphate (DMAP) and tryptophan to form 4-dimethylallyl-L-tryptophan. The second step is catalyzed by the methyltransferase ifgB that methylates 4-dimethylallyl-L-tryptophan in the presence of S-adenosyl-L-methionine, resulting in the formation of N-methyl-dimethylallyl-L-tryptophan. The catalase ifgD and the FAD-dependent oxidoreductase ifgC then transform N-methyl-dimethylallyl-L-tryptophan to chanoclavine-I which is further oxidized by ifgE in the presence of NAD(+), resulting in the formation of chanoclavine-I aldehyde. The chanoclavine-I aldehyde reductases ifgG and/or fgaOx3 reduce chanoclavine-I aldehyde to dihydrochanoclavine-I aldehyde that spontaneously dehydrates to form 6,8-dimethyl-6,7-didehydroergoline. The festuclavine dehydrogenases ifgF1 and/or ifgF2 then catalyze the reduction of 6,8-dimethyl-6,7-didehydroergoline to form festuclavine. Hydrolysis of festuclavine by a yet undetermined cytochrome P450 monooxygenase (called ifgH) then leads to the formation of isofumigaclavine B which is in turn acetylated by ifgI to isofumigaclavine A. Penicillium roqueforti has interestingly at least two sets of genes for the consumption of chanoclavine-I aldehyde on three different loci, the OYEs ifgG/fgaOx3 and the festuclavine synthase homologs ifgF1/ifgF2. The reason for the duplication of these genes is unclear, probably to ensure the conversion of chanoclavine-I aldehyde by differential gene expression under various environmental conditions. In Penicillium roqueforti (strain FM164), this protein is Chanoclavine-I aldehyde reductase ifgG.